A 422-amino-acid chain; its full sequence is L-2-hydroxyglutarate dehydrogenase (422 aa).

It belongs to the L2HGDH family. The cofactor is FAD.

It is found in the cell inner membrane. The catalysed reaction is (S)-2-hydroxyglutarate + a quinone = a quinol + 2-oxoglutarate. Its pathway is amino-acid degradation. Functionally, catalyzes the dehydrogenation of L-2-hydroxyglutarate (L2HG) to alpha-ketoglutarate and couples to the respiratory chain by feeding electrons from the reaction into the membrane quinone pool. Functions in a L-lysine degradation pathway that proceeds via cadaverine, glutarate and L-2-hydroxyglutarate. Also displays some oxidase activity in vitro on L-2-hydroxyglutarate with O2 as the electron acceptor, but this activity is most likely not physiological. This chain is L-2-hydroxyglutarate dehydrogenase, found in Salmonella houtenae.